A 285-amino-acid chain; its full sequence is RNase adapter protein RapZ (285 aa).

Residue 8–15 (GRSGSGKS) coordinates ATP. GTP is bound at residue 56-59 (DVRN). An RNA-binding region spans residues 266 to 285 (RSRGKNVQSRHRTLEKRKPS).

This sequence belongs to the RapZ-like family. RapZ subfamily. In terms of assembly, homotrimer.

In terms of biological role, modulates the synthesis of GlmS, by affecting the processing and stability of the regulatory small RNA GlmZ. When glucosamine-6-phosphate (GlcN6P) concentrations are high in the cell, RapZ binds GlmZ and targets it to cleavage by RNase E. Consequently, GlmZ is inactivated and unable to activate GlmS synthesis. Under low GlcN6P concentrations, RapZ is sequestered and inactivated by an other regulatory small RNA, GlmY, preventing GlmZ degradation and leading to synthesis of GlmS. This chain is RNase adapter protein RapZ, found in Pectobacterium atrosepticum (strain SCRI 1043 / ATCC BAA-672) (Erwinia carotovora subsp. atroseptica).